Here is a 526-residue protein sequence, read N- to C-terminus: ATP synthase subunit alpha (526 aa).

Gly-171–Thr-178 is a binding site for ATP.

It belongs to the ATPase alpha/beta chains family. F-type ATPases have 2 components, CF(1) - the catalytic core - and CF(0) - the membrane proton channel. CF(1) has five subunits: alpha(3), beta(3), gamma(1), delta(1), epsilon(1). CF(0) has four main subunits: a(1), b(1), b'(1) and c(9-12).

The protein resides in the cell inner membrane. The catalysed reaction is ATP + H2O + 4 H(+)(in) = ADP + phosphate + 5 H(+)(out). In terms of biological role, produces ATP from ADP in the presence of a proton gradient across the membrane. The alpha chain is a regulatory subunit. This chain is ATP synthase subunit alpha, found in Chlorobium chlorochromatii (strain CaD3).